Reading from the N-terminus, the 305-residue chain is Succinate--CoA ligase [ADP-forming] subunit alpha (305 aa).

CoA-binding positions include 17 to 20 (TGKE), lysine 43, and 96 to 98 (ITE). Tyrosine 161 contacts substrate. The active-site Tele-phosphohistidine intermediate is the histidine 249.

This sequence belongs to the succinate/malate CoA ligase alpha subunit family. Heterotetramer of two alpha and two beta subunits.

It carries out the reaction succinate + ATP + CoA = succinyl-CoA + ADP + phosphate. The enzyme catalyses GTP + succinate + CoA = succinyl-CoA + GDP + phosphate. The protein operates within carbohydrate metabolism; tricarboxylic acid cycle; succinate from succinyl-CoA (ligase route): step 1/1. Its function is as follows. Succinyl-CoA synthetase functions in the citric acid cycle (TCA), coupling the hydrolysis of succinyl-CoA to the synthesis of either ATP or GTP and thus represents the only step of substrate-level phosphorylation in the TCA. The alpha subunit of the enzyme binds the substrates coenzyme A and phosphate, while succinate binding and nucleotide specificity is provided by the beta subunit. The chain is Succinate--CoA ligase [ADP-forming] subunit alpha from Aquifex aeolicus (strain VF5).